The primary structure comprises 160 residues: Periplasmic nitrate reductase, electron transfer subunit (160 aa).

Positions 1 to 25 (MKTRIIFAALALAAAMPLLVSGVFA) are cleaved as a signal peptide. Heme c contacts are provided by His-73, Cys-87, Cys-90, His-91, His-108, Cys-127, Cys-130, and His-131.

It belongs to the NapB family. In terms of assembly, component of the periplasmic nitrate reductase NapAB complex composed of NapA and NapB. Post-translationally, binds 2 heme C groups per subunit.

It localises to the periplasm. Electron transfer subunit of the periplasmic nitrate reductase complex NapAB. Receives electrons from the membrane-anchored tetraheme c-type NapC protein and transfers these to NapA subunit, thus allowing electron flow between membrane and periplasm. Essential for periplasmic nitrate reduction with nitrate as the terminal electron acceptor. The protein is Periplasmic nitrate reductase, electron transfer subunit of Azospirillum brasilense.